The primary structure comprises 491 residues: Mitochondrial MYO2 receptor-related protein 1 (491 aa).

Threonine 12 carries the post-translational modification Phosphothreonine. Residues serine 16 and serine 37 each carry the phosphoserine modification. The stretch at 295–384 (NAEEANSREK…CKKVLKKLTE (90 aa)) forms a coiled coil. The interaction with MYO2 stretch occupies residues 300 to 439 (NSREKSNLDI…GTSSEEDHLT (140 aa)). A disordered region spans residues 419–491 (KKIEEQPDSS…LPVQVEKKEK (73 aa)). Polar residues predominate over residues 461 to 472 (SAISTTASVQSG).

As to quaternary structure, interacts with MYO2 and PCL7. Phosphorylated by the cyclin-CDK PCL7-PHO85.

It is found in the bud tip. The protein resides in the bud neck. It localises to the mitochondrion outer membrane. Functionally, involved in the guiding of mitochondrial tubules to the bud tip during cell division. In Saccharomyces cerevisiae (strain ATCC 204508 / S288c) (Baker's yeast), this protein is Mitochondrial MYO2 receptor-related protein 1 (MMR1).